We begin with the raw amino-acid sequence, 168 residues long: Cell division inhibitor SulA (168 aa).

The segment at 106-112 (ALLTGNY) is ftsZ binding. The lon protease binding stretch occupies residues 161 to 168 (KIHSYLYH).

Belongs to the SulA family. Interacts with FtsZ. In terms of processing, is rapidly cleaved and degraded by the Lon protease once DNA damage is repaired.

In terms of biological role, component of the SOS system and an inhibitor of cell division. Accumulation of SulA causes rapid cessation of cell division and the appearance of long, non-septate filaments. In the presence of GTP, binds a polymerization-competent form of FtsZ in a 1:1 ratio, thus inhibiting FtsZ polymerization and therefore preventing it from participating in the assembly of the Z ring. This mechanism prevents the premature segregation of damaged DNA to daughter cells during cell division. This chain is Cell division inhibitor SulA, found in Yersinia pestis bv. Antiqua (strain Antiqua).